Consider the following 250-residue polypeptide: 2,3-bisphosphoglycerate-dependent phosphoglycerate mutase (250 aa).

Substrate-binding positions include 10-17 (RHGESQWN), 23-24 (TG), R62, 89-92 (ERHY), K100, 116-117 (RR), and 185-186 (GN). H11 serves as the catalytic Tele-phosphohistidine intermediate. E89 acts as the Proton donor/acceptor in catalysis.

This sequence belongs to the phosphoglycerate mutase family. BPG-dependent PGAM subfamily. In terms of assembly, homodimer.

It catalyses the reaction (2R)-2-phosphoglycerate = (2R)-3-phosphoglycerate. It participates in carbohydrate degradation; glycolysis; pyruvate from D-glyceraldehyde 3-phosphate: step 3/5. In terms of biological role, catalyzes the interconversion of 2-phosphoglycerate and 3-phosphoglycerate. This is 2,3-bisphosphoglycerate-dependent phosphoglycerate mutase from Erwinia tasmaniensis (strain DSM 17950 / CFBP 7177 / CIP 109463 / NCPPB 4357 / Et1/99).